A 172-amino-acid polypeptide reads, in one-letter code: Monopolar attachment protein 1 (172 aa).

Positions 15 to 30 are enriched in basic residues; that stretch reads KKNKNPKISNSKKKNS. The disordered stretch occupies residues 15–43; that stretch reads KKNKNPKISNSKKKNSTRPALQDKTNQTL. Over residues 31–43 the composition is skewed to polar residues; the sequence is TRPALQDKTNQTL. The POLO box domain (PBD)-binding signature appears at 100-102; it reads STP.

As to quaternary structure, interacts with rec8, Interacts with plo1.

The protein localises to the nucleus. The protein resides in the chromosome. It is found in the centromere. Its subcellular location is the kinetochore. Functionally, plays an important role in chromosome segregation during meiosis I by allowing meiotic rec8 to establish cohesion at the centromeric central core and thereby promote the side-by-side structure of kinetochores at meiosis I. Enables monopolar attachment during meiosis I. Required to facilitate kinetochore mono-orientation during meiosis I, when kinetochores on sister chromosomes face the same direction and are thus captured and pulled by spindle fibers from the same pole. Acts in collaboration with plo1. This Schizosaccharomyces pombe (strain 972 / ATCC 24843) (Fission yeast) protein is Monopolar attachment protein 1 (moa1).